Reading from the N-terminus, the 165-residue chain is Transcription elongation factor A protein-like 1 (165 aa).

A disordered region spans residues 1–101; sequence MENTRSENEE…EQPPCGVGKH (101 aa). Acidic residues predominate over residues 33-60; the sequence is CSEEDQSSEDLSSEEQSSEEEFFPEELL.

This sequence belongs to the TFS-II family. TFA subfamily.

Its subcellular location is the nucleus. Functionally, may be involved in transcriptional regulation. Modulates various viral and cellular promoters in a promoter context-dependent manner. Does not bind DNA directly. This Mus musculus (Mouse) protein is Transcription elongation factor A protein-like 1.